The primary structure comprises 416 residues: Enterobactin exporter EntS (416 aa).

Over 1–21 the chain is Cytoplasmic; the sequence is MNKQSWLLNLSLLKTHPAFRA. Residues 22–42 traverse the membrane as a helical segment; that stretch reads VFLARFISIVSLGLLGVAVPV. Topologically, residues 43–55 are periplasmic; sequence QIQMMTHSTWQVG. The chain crosses the membrane as a helical span at residues 56–76; that stretch reads LSVTLTGGAMFVGLMVGGVLA. Residues 77–83 lie on the Cytoplasmic side of the membrane; it reads DRYERKK. The helical transmembrane segment at 84-104 threads the bilayer; the sequence is VILLARGTCGIGFIGLCLNAL. Residues 105–109 are Periplasmic-facing; sequence LPEPS. Residues 110-130 traverse the membrane as a helical segment; it reads LLAIYLLGLWDGFFASLGVTA. Residues 131-156 are Cytoplasmic-facing; that stretch reads LLAATPALVGRENLMQAGAITMLTVR. The helical transmembrane segment at 157-177 threads the bilayer; sequence LGSVNSPMIGGLLLAIGGVAW. N178 is a topological domain (periplasmic). A helical membrane pass occupies residues 179–199; the sequence is YGLAAAGTFITLLPLLSLPAL. At 200 to 218 the chain is on the cytoplasmic side; it reads PPPPQPREHPLKSLLAGFR. Residues 219–239 traverse the membrane as a helical segment; it reads FLLASPLVGGIALLGGLLTMA. Residues 240 to 256 are Periplasmic-facing; sequence SAVRVLYPALADNWQMS. A helical membrane pass occupies residues 257 to 277; the sequence is AAQIGFLYAAIPLGAAIGALT. The Cytoplasmic portion of the chain corresponds to 278–287; that stretch reads SGKLAHSARP. The helical transmembrane segment at 288 to 307 threads the bilayer; the sequence is GLLMLLSTLGSFLAIGLFGL. Topologically, residues 308 to 313 are periplasmic; the sequence is MPMWIL. The helical transmembrane segment at 314–336 threads the bilayer; sequence GVVCLALFGWLSAVSSLLQYTML. The Cytoplasmic segment spans residues 337-356; sequence QTQTPEVMLGRINGLWTAQN. A helical transmembrane segment spans residues 357 to 377; it reads VTGDAIGAALLGGLGAMMTPV. Position 378 (A378) is a topological domain, periplasmic. The helical transmembrane segment at 379–399 threads the bilayer; sequence SASASGFGLLIIGVLLLLVLV. The Cytoplasmic portion of the chain corresponds to 400-416; it reads ELRHFRQTPPQVTASDS.

This sequence belongs to the major facilitator superfamily. EntS (TC 2.A.1.38) family.

It is found in the cell inner membrane. In terms of biological role, component of an export pathway for enterobactin. The chain is Enterobactin exporter EntS from Shigella dysenteriae serotype 1 (strain Sd197).